The following is a 217-amino-acid chain: Probable transaldolase (217 aa).

Lys-83 acts as the Schiff-base intermediate with substrate in catalysis.

Belongs to the transaldolase family. Type 3B subfamily.

The protein localises to the cytoplasm. The catalysed reaction is D-sedoheptulose 7-phosphate + D-glyceraldehyde 3-phosphate = D-erythrose 4-phosphate + beta-D-fructose 6-phosphate. It participates in carbohydrate degradation; pentose phosphate pathway; D-glyceraldehyde 3-phosphate and beta-D-fructose 6-phosphate from D-ribose 5-phosphate and D-xylulose 5-phosphate (non-oxidative stage): step 2/3. Its function is as follows. Transaldolase is important for the balance of metabolites in the pentose-phosphate pathway. The sequence is that of Probable transaldolase from Rhizorhabdus wittichii (strain DSM 6014 / CCUG 31198 / JCM 15750 / NBRC 105917 / EY 4224 / RW1) (Sphingomonas wittichii).